A 150-amino-acid chain; its full sequence is Ribonuclease P protein subunit p21 (150 aa).

Position 2 is an N-acetylalanine (Ala2). Positions 62, 65, 92, and 95 each coordinate Zn(2+). The tract at residues 121–150 (QADINPSEPLPNIADLPKENIQTQALNTSE) is disordered. Residues 140–150 (NIQTQALNTSE) show a composition bias toward polar residues.

It belongs to the eukaryotic/archaeal RNase P protein component 4 family. RNase P consists of a catalytic RNA moiety and about 10 protein subunits; POP1, POP4, POP5, POP7, RPP14, RPP21, RPP25, RPP30, RPP38 and RPP40. Within the RNase P complex, POP1, POP7 and RPP25 form the 'finger' subcomplex, POP5, RPP14, RPP40 and homodimeric RPP30 form the 'palm' subcomplex, and RPP21, POP4 and RPP38 form the 'wrist' subcomplex. All subunits of the RNase P complex interact with the catalytic RNA.

It is found in the nucleus. It localises to the nucleolus. Its function is as follows. Component of ribonuclease P, a ribonucleoprotein complex that generates mature tRNA molecules by cleaving their 5'-ends. The protein is Ribonuclease P protein subunit p21 (Rpp21) of Mus musculus (Mouse).